The chain runs to 83 residues: Antitoxin ParD1 (83 aa).

Residues 33–60 (IRSALRLLEDRETQLRALREALEAGERS) adopt a coiled-coil conformation. The tract at residues 54–83 (LEAGERSGSSTPFDFDGFLGRKRADASRGR) is disordered.

Belongs to the ParD antitoxin family.

Functionally, antitoxin component of a type II toxin-antitoxin (TA) system. This chain is Antitoxin ParD1 (parD1), found in Mycobacterium tuberculosis (strain CDC 1551 / Oshkosh).